A 1706-amino-acid polypeptide reads, in one-letter code: PR domain zinc finger protein 2 (1706 aa).

The 114-residue stretch at 27 to 140 (EEVRLFPSAV…PGEELLVWYN (114 aa)) folds into the SET domain. A disordered region spans residues 154 to 342 (ERASARSKRS…TPPPHTPRAR (189 aa)). Positions 158-183 (ARSKRSSPKSRRGKKKSHENKNKGIR) are enriched in basic residues. The span at 185-199 (HPTQLKASELDSTFA) shows a compositional bias: polar residues. The span at 258-294 (TDCEVNDVEEEELEEEEELEEEEEEELGEDGVEEADM) shows a compositional bias: acidic residues. A compositionally biased stretch (basic and acidic residues) spans 299 to 313 (SAKEPEIRCEEKPED). C2H2-type zinc fingers lie at residues 355 to 377 (FPCQ…MHIH) and 385 to 407 (FKCK…ERRH). Disordered regions lie at residues 400–446 (RRRH…QLGQ), 492–542 (RRHQ…EEEG), and 618–655 (LLKD…STAP). S416 carries the post-translational modification Phosphoserine. Positions 427-439 (DGKGENVTSKDES) are enriched in basic and acidic residues. Residues 476-499 (HPCKYCKKVFGTHTNMRRHQRRVH) form a C2H2-type 3 zinc finger. A Phosphoserine modification is found at S637. Glycyl lysine isopeptide (Lys-Gly) (interchain with G-Cter in SUMO2) cross-links involve residues K645, K684, and K686. Disordered regions lie at residues 724-794 (TSSR…SPPC), 823-1075 (SGVK…SSVV), and 1088-1112 (VTFK…AGGQ). A compositionally biased stretch (low complexity) spans 733–743 (SSPPSSPQHSP). Position 738 is a phosphoserine (S738). A Glycyl lysine isopeptide (Lys-Gly) (interchain with G-Cter in SUMO2) cross-link involves residue K769. 3 positions are modified to phosphoserine: S776, S780, and S791. Residues 823 to 832 (SGVKQKSEGT) are compositionally biased toward polar residues. Residues 846–863 (SVHKKPCDSEGKEFKENH) are compositionally biased toward basic and acidic residues. Glycyl lysine isopeptide (Lys-Gly) (interchain with G-Cter in SUMO2) cross-links involve residues K860 and K870. Polar residues-rich tracts occupy residues 891–912 (SLPT…SPDT) and 943–952 (LQTASLSSGQ). Residues 962–983 (PSSPPPCPPVLTVATPPPPLLP) show a composition bias toward pro residues. The segment covering 993 to 1009 (DASPQQCPSPFSNTTAQ) has biased composition (polar residues). Residues 1010 to 1019 (SPLPILSPTV) show a composition bias toward low complexity. Pro residues predominate over residues 1020–1030 (SPSPSPIPPVE). Low complexity predominate over residues 1034-1062 (SAASPGPPTLSSSSSSSSSFPSSSCSSTS). Positions 1091–1106 (KQEESESEGLKPKEEA) are enriched in basic and acidic residues. C2H2-type zinc fingers lie at residues 1123-1145 (FICN…LSVH), 1151-1174 (FKCE…FLLH), and 1180-1203 (FVCS…RDLH). Residues K1136 and K1140 each participate in a glycyl lysine isopeptide (Lys-Gly) (interchain with G-Cter in SUMO2) cross-link. Positions 1218 to 1227 (LRPQNFTDPS) are enriched in polar residues. Residues 1218-1251 (LRPQNFTDPSKANVEHMPSLPEEPLETSREEELN) are disordered. Residue K1269 forms a Glycyl lysine isopeptide (Lys-Gly) (interchain with G-Cter in SUMO2) linkage. The segment at 1321-1343 (IRCTKCGKGVDNMPELHKHILAC) adopts a C2H2-type 7; atypical zinc-finger fold. A C2H2-type 8; atypical zinc finger spans residues 1443 to 1465 (HICPYCDREFTYIGSLNKHAAFS). Residues 1466–1563 (CPKKPLSPSK…KKASSSSLRN (98 aa)) form a disordered region. Over residues 1474 to 1486 (SKRKVSHSSKKGG) the composition is skewed to basic residues. The segment covering 1487 to 1498 (HASSSSSDRNSS) has biased composition (low complexity). Residues 1528 to 1544 (GPAQASLPSSSFRSRQN) are compositionally biased toward polar residues. Over residues 1548-1563 (AASVKSKKASSSSLRN) the composition is skewed to low complexity.

This sequence belongs to the class V-like SAM-binding methyltransferase superfamily. Binds to the retinoblastoma protein (RB). Interacts with GATA3.

The protein resides in the nucleus. The catalysed reaction is L-lysyl-[histone] + S-adenosyl-L-methionine = N(6)-methyl-L-lysyl-[histone] + S-adenosyl-L-homocysteine + H(+). It catalyses the reaction L-lysyl(9)-[histone H3] + 3 S-adenosyl-L-methionine = N(6),N(6),N(6)-trimethyl-L-lysyl(9)-[histone H3] + 3 S-adenosyl-L-homocysteine + 3 H(+). Functionally, S-adenosyl-L-methionine-dependent histone methyltransferase that specifically methylates 'Lys-9' of histone H3. May function as a DNA-binding transcription factor. Binds to the macrophage-specific TPA-responsive element (MTE) of the HMOX1 (heme oxygenase 1) gene and may act as a transcriptional activator of this gene. In Rattus norvegicus (Rat), this protein is PR domain zinc finger protein 2 (Prdm2).